A 473-amino-acid polypeptide reads, in one-letter code: 3-isopropylmalate dehydratase large subunit (473 aa).

The [4Fe-4S] cluster site is built by C354, C414, and C417.

This sequence belongs to the aconitase/IPM isomerase family. LeuC type 1 subfamily. In terms of assembly, heterodimer of LeuC and LeuD. It depends on [4Fe-4S] cluster as a cofactor.

It carries out the reaction (2R,3S)-3-isopropylmalate = (2S)-2-isopropylmalate. It functions in the pathway amino-acid biosynthesis; L-leucine biosynthesis; L-leucine from 3-methyl-2-oxobutanoate: step 2/4. In terms of biological role, catalyzes the isomerization between 2-isopropylmalate and 3-isopropylmalate, via the formation of 2-isopropylmaleate. The sequence is that of 3-isopropylmalate dehydratase large subunit from Mycobacterium ulcerans (strain Agy99).